Reading from the N-terminus, the 166-residue chain is Ribosome maturation factor RimM (166 aa).

The 74-residue stretch at 90–163 folds into the PRC barrel domain; sequence EGEFLVSQII…TVTIELLEGL (74 aa).

This sequence belongs to the RimM family. As to quaternary structure, binds ribosomal protein uS19.

Its subcellular location is the cytoplasm. In terms of biological role, an accessory protein needed during the final step in the assembly of 30S ribosomal subunit, possibly for assembly of the head region. Essential for efficient processing of 16S rRNA. May be needed both before and after RbfA during the maturation of 16S rRNA. It has affinity for free ribosomal 30S subunits but not for 70S ribosomes. This Oenococcus oeni (strain ATCC BAA-331 / PSU-1) protein is Ribosome maturation factor RimM.